A 33-amino-acid polypeptide reads, in one-letter code: Cytochrome b6-f complex subunit 8 (33 aa).

Residues Ile2–Val22 traverse the membrane as a helical segment.

The protein belongs to the PetN family. The 4 large subunits of the cytochrome b6-f complex are cytochrome b6, subunit IV (17 kDa polypeptide, PetD), cytochrome f and the Rieske protein, while the 4 small subunits are PetG, PetL, PetM and PetN. The complex functions as a dimer.

It localises to the cellular thylakoid membrane. Component of the cytochrome b6-f complex, which mediates electron transfer between photosystem II (PSII) and photosystem I (PSI), cyclic electron flow around PSI, and state transitions. This Prochlorococcus marinus (strain MIT 9301) protein is Cytochrome b6-f complex subunit 8.